A 367-amino-acid chain; its full sequence is Peptide chain release factor 1 (367 aa).

Position 238 is an N5-methylglutamine (Q238).

It belongs to the prokaryotic/mitochondrial release factor family. Methylated by PrmC. Methylation increases the termination efficiency of RF1.

The protein localises to the cytoplasm. Its function is as follows. Peptide chain release factor 1 directs the termination of translation in response to the peptide chain termination codons UAG and UAA. This chain is Peptide chain release factor 1, found in Dictyoglomus thermophilum (strain ATCC 35947 / DSM 3960 / H-6-12).